A 400-amino-acid chain; its full sequence is Endoglucanase A (400 aa).

A signal peptide spans 1-32 (MTKTFKKFSIAGLALLFMATAAFAGWSTKASA). Glu-187 functions as the Proton donor in the catalytic mechanism. The active-site Nucleophile is the Glu-328.

This sequence belongs to the glycosyl hydrolase 5 (cellulase A) family.

The protein localises to the secreted. The enzyme catalyses Endohydrolysis of (1-&gt;4)-beta-D-glucosidic linkages in cellulose, lichenin and cereal beta-D-glucans.. Its activity is regulated as follows. Strongly inhibited by Hg(2+), Ag(+) and Fe(3+). To a lesser extent, is also inhibited by Pb(2+), Mn(2+), Sn(2+) and Cu(2+). By contrast, Ni(2+), Zn(2+), Co(2+), Ba(2+) and NH(4)(+) do not affect enzyme activity, while 10 mM Ca(2+), and Mg(2+) produce a stimulating effect. Is also strongly inhibited by chemicals such as N-bromosuccinimide and dimethyl(2-dihydroxy-5-nitrobenzyl)sulphonium bromide. Is not affected by N-acetylimidazole. Its function is as follows. Endoglucanase with high activity on carboxymethylcellulose (CMC) and lichenan, but not active on Avicel. This Paenibacillus barcinonensis protein is Endoglucanase A (celA).